Reading from the N-terminus, the 329-residue chain is Helicase VP6-A (329 aa).

Disordered regions lie at residues 27–130 (INLV…TNGG) and 189–232 (DLRR…SEEP). 3 stretches are compositionally biased toward basic and acidic residues: residues 36 to 58 (EGGKEDKTEPKEESKAEGSKDGE), 65 to 83 (GQKEEGGKETKDADVDRRI), and 96 to 109 (SGERANENANRGDG). Lys110 serves as a coordination point for ATP. Positions 110–129 (KVGGGGGDADAGVGATGTNG) are enriched in gly residues. Composition is skewed to basic and acidic residues over residues 189–207 (DLRRKEKNGTHAKAVERGG) and 215–232 (HGDAQREGVEEEKTSEEP).

It belongs to the reoviruses VP6 family. In terms of assembly, homohexamer.

It localises to the virion. The catalysed reaction is ATP + H2O = ADP + phosphate + H(+). ATP dependent RNA helicase essential for RNA packaging and viral transcription. Possesses ss- and dsRNA-binding capacity. This chain is Helicase VP6-A (Segment-9), found in Antilocapra americana (Pronghorn).